Here is a 432-residue protein sequence, read N- to C-terminus: Ciliated left-right organizer protein containing ZP-N domains homolog (432 aa).

In terms of tissue distribution, expressed specifically by cells of the ciliated left-right organizer.

The protein is Ciliated left-right organizer protein containing ZP-N domains homolog (ciroz) of Danio rerio (Zebrafish).